The sequence spans 124 residues: Glutaredoxin-2 (124 aa).

The cysteines at positions 13 and 16 are disulfide-linked.

Belongs to the glutaredoxin family. As to quaternary structure, homodimer.

The protein localises to the host cytoplasm. In terms of biological role, glutaredoxin necessary for virion morphogenesis and virus replication. Functions as a thiol-disulfide transfer protein between membrane-associated OPG128 and substrates OPG095 or OPG053. The complete pathway for formation of disulfide bonds in intracellular virion membrane proteins sequentially involves oxidation of OPG072, OPG128 and OPG088. Exhibit thioltransferase and dehydroascorbate reductase activities in vitro. In Mus musculus (Mouse), this protein is Glutaredoxin-2 (OPG088).